The sequence spans 262 residues: MKIHDFKNKKQEQKKISMLTCYDYPSACIIANSNIHCVLVGDSVAMAVHGHPTTIMATIEMMELHTQAVARGLGKQFLITDLPFLGHKSSQGHTVENVKRLLQAGAQAVKIEGADKDTCQTISHLVNAGIPVMGHIGLTPQSIHQLGGYKVQGKNSEQAETLLQQADALEQAGCFAVVIECVPQGLAKTITDSLVIPTIGIGAGPGTDGQVLVWHDMLGLQTSFNPKFVKKYFRAKDHFIEALNSYVQQVQQMHFPANEHSF.

2 residues coordinate Mg(2+): aspartate 42 and aspartate 81. Residues 42–43, aspartate 81, and lysine 110 each bind 3-methyl-2-oxobutanoate; that span reads DS. Glutamate 112 is a binding site for Mg(2+). The active-site Proton acceptor is the glutamate 180.

This sequence belongs to the PanB family. As to quaternary structure, homodecamer; pentamer of dimers. Requires Mg(2+) as cofactor.

The protein resides in the cytoplasm. It catalyses the reaction 3-methyl-2-oxobutanoate + (6R)-5,10-methylene-5,6,7,8-tetrahydrofolate + H2O = 2-dehydropantoate + (6S)-5,6,7,8-tetrahydrofolate. It participates in cofactor biosynthesis; (R)-pantothenate biosynthesis; (R)-pantoate from 3-methyl-2-oxobutanoate: step 1/2. Catalyzes the reversible reaction in which hydroxymethyl group from 5,10-methylenetetrahydrofolate is transferred onto alpha-ketoisovalerate to form ketopantoate. This is 3-methyl-2-oxobutanoate hydroxymethyltransferase from Legionella pneumophila (strain Corby).